A 278-amino-acid polypeptide reads, in one-letter code: Probable septum site-determining protein MinC (278 aa).

This sequence belongs to the MinC family. Interacts with MinD and FtsZ.

Its function is as follows. Cell division inhibitor that blocks the formation of polar Z ring septums. Rapidly oscillates between the poles of the cell to destabilize FtsZ filaments that have formed before they mature into polar Z rings. Prevents FtsZ polymerization. In Gloeobacter violaceus (strain ATCC 29082 / PCC 7421), this protein is Probable septum site-determining protein MinC.